The sequence spans 239 residues: Uridylate kinase (239 aa).

Residue 12–15 (KLSG) participates in ATP binding. Position 54 (G54) interacts with UMP. ATP contacts are provided by G55 and R59. UMP contacts are provided by residues D74 and 135–142 (TGNPYFTT). The ATP site is built by T162, Y168, and D171.

The protein belongs to the UMP kinase family. In terms of assembly, homohexamer.

The protein resides in the cytoplasm. The enzyme catalyses UMP + ATP = UDP + ADP. Its pathway is pyrimidine metabolism; CTP biosynthesis via de novo pathway; UDP from UMP (UMPK route): step 1/1. With respect to regulation, inhibited by UTP. Functionally, catalyzes the reversible phosphorylation of UMP to UDP. The polypeptide is Uridylate kinase (Fusobacterium nucleatum subsp. nucleatum (strain ATCC 25586 / DSM 15643 / BCRC 10681 / CIP 101130 / JCM 8532 / KCTC 2640 / LMG 13131 / VPI 4355)).